The primary structure comprises 314 residues: Ribosomal RNA small subunit methyltransferase A (314 aa).

6 residues coordinate S-adenosyl-L-methionine: Asn29, Val31, Gly56, Glu77, Asp107, and Asn126. The disordered stretch occupies residues 291 to 314 (PKADDAGDDADAQAKADGAQVSTL). Positions 303–314 (QAKADGAQVSTL) are enriched in low complexity.

The protein belongs to the class I-like SAM-binding methyltransferase superfamily. rRNA adenine N(6)-methyltransferase family. RsmA subfamily.

It is found in the cytoplasm. The catalysed reaction is adenosine(1518)/adenosine(1519) in 16S rRNA + 4 S-adenosyl-L-methionine = N(6)-dimethyladenosine(1518)/N(6)-dimethyladenosine(1519) in 16S rRNA + 4 S-adenosyl-L-homocysteine + 4 H(+). Functionally, specifically dimethylates two adjacent adenosines (A1518 and A1519) in the loop of a conserved hairpin near the 3'-end of 16S rRNA in the 30S particle. May play a critical role in biogenesis of 30S subunits. This chain is Ribosomal RNA small subunit methyltransferase A, found in Mycolicibacterium gilvum (strain PYR-GCK) (Mycobacterium gilvum (strain PYR-GCK)).